The primary structure comprises 259 residues: Imidazole glycerol phosphate synthase subunit HisF (259 aa).

Residues aspartate 11 and aspartate 130 contribute to the active site.

It belongs to the HisA/HisF family. In terms of assembly, heterodimer of HisH and HisF.

The protein localises to the cytoplasm. The catalysed reaction is 5-[(5-phospho-1-deoxy-D-ribulos-1-ylimino)methylamino]-1-(5-phospho-beta-D-ribosyl)imidazole-4-carboxamide + L-glutamine = D-erythro-1-(imidazol-4-yl)glycerol 3-phosphate + 5-amino-1-(5-phospho-beta-D-ribosyl)imidazole-4-carboxamide + L-glutamate + H(+). Its pathway is amino-acid biosynthesis; L-histidine biosynthesis; L-histidine from 5-phospho-alpha-D-ribose 1-diphosphate: step 5/9. Functionally, IGPS catalyzes the conversion of PRFAR and glutamine to IGP, AICAR and glutamate. The HisF subunit catalyzes the cyclization activity that produces IGP and AICAR from PRFAR using the ammonia provided by the HisH subunit. The sequence is that of Imidazole glycerol phosphate synthase subunit HisF from Lactococcus lactis subsp. cremoris (strain SK11).